A 760-amino-acid polypeptide reads, in one-letter code: UDP-N-acetylmuramoyl-L-alanyl-D-glutamate--2,6-diaminopimelate ligase MurE homolog, chloroplastic (760 aa).

Residues 1-59 constitute a chloroplast transit peptide; the sequence is MATAPLAFRLPFPFSFPSASRPPPSRILAPPTPRRLPLRLAAAAARRFRPPTADDEPPE. Disordered regions lie at residues 13–159 and 176–205; these read PFSF…TDEL and LSVVSVADEEDEEVEGGEDEDDGLPLDEDG. The segment covering 20–34 has biased composition (pro residues); that stretch reads SRPPPSRILAPPTPR. Residues 53-62 show a composition bias toward acidic residues; that stretch reads ADDEPPEAAE. Positions 118 to 132 are enriched in basic and acidic residues; the sequence is EIDRAIAEKREEFTR. 2 stretches are compositionally biased toward acidic residues: residues 150 to 159 and 182 to 205; these read PEDEDLTDEL and ADEEDEEVEGGEDEDDGLPLDEDG.

This sequence belongs to the MurCDEF family. MurE subfamily. As to quaternary structure, component of the plastid-encoded plastid RNA polymerase (PEP) complex.

Its subcellular location is the plastid. The protein resides in the chloroplast. Functionally, required for the activity of the plastid-encoded RNA polymerase (PEP) and full expression of genes transcribed by PEP. Required for the proper build-up and formation of the PEP-complex. The sequence is that of UDP-N-acetylmuramoyl-L-alanyl-D-glutamate--2,6-diaminopimelate ligase MurE homolog, chloroplastic from Zea mays (Maize).